A 249-amino-acid chain; its full sequence is MPQAPETLDGWYSLHLLYAIDWSSLRLVPTEERQTIVDELQTFLNKHEEARTNHVGDHAFYNITGQKADILLWALRPEMKDLNAFENEFNKLKIADFLIPTYSYVSIIELGNYLAGKSDEDPYENPHIKPRLFPELPQSEYICFYPMDKRRNETYNWYMLPLEKRQELMYAHGKIGRQYAGKIKQFITGSVGFDDFEWGVTLFADDPLQFKKIVYEMRFDETTARYGDFGSFYVGHIVTKDNLQDLFAL.

Fe-coproporphyrin III is bound by residues R131, 145–149 (YPMDK), H172, and Q185. Residue Y145 is part of the active site.

This sequence belongs to the ChdC family. Type 1 subfamily. Requires Fe-coproporphyrin III as cofactor.

It catalyses the reaction Fe-coproporphyrin III + 2 H2O2 + 2 H(+) = heme b + 2 CO2 + 4 H2O. It carries out the reaction Fe-coproporphyrin III + H2O2 + H(+) = harderoheme III + CO2 + 2 H2O. The enzyme catalyses harderoheme III + H2O2 + H(+) = heme b + CO2 + 2 H2O. It participates in porphyrin-containing compound metabolism; protoheme biosynthesis. In terms of biological role, involved in coproporphyrin-dependent heme b biosynthesis. Catalyzes the decarboxylation of Fe-coproporphyrin III (coproheme) to heme b (protoheme IX), the last step of the pathway. The reaction occurs in a stepwise manner with a three-propionate intermediate. This chain is Coproheme decarboxylase, found in Staphylococcus saprophyticus subsp. saprophyticus (strain ATCC 15305 / DSM 20229 / NCIMB 8711 / NCTC 7292 / S-41).